Consider the following 528-residue polypeptide: MSDNTPTPQKNPDTNPYASLISQQIAIIPSFTLESGVTLNNVPVAYKTWGKLNEKADNCLVICHALTGSADVEDWWGPLLGLNKAFDPTRFFIFCGNVIGSPYGTISSVTTNPETGKPFGPEMPGSSVKDDVRLHYIILKSLGVRSVAAVVGGSMGGMTVLEYPLNTPPGFVRAIIPLATSARHSAWCISWGEAQRQSIYSDPDYKDGYYYEIEEEGGKVDLARQPARGLAAARMAALLTYRSRDSFESRFGRRAGGGKSSVPKGGVRIMGGQETTDPSVPSESDLAAKSPSWRAWREHNDGHRSAGARPISRSGSEGPAHREGDAAQAEVVKTQDVKANGNKIGTGGEAPPKIFSAQSYLRYQGDKFTGRFDANCYIHITRKLDTHDLSAPSRDTSLSSLSSGLPSSPDATEEELNARLIHALSLEPPALVIGIESDGLFTTSEQRELAAGIPDAELVVIPSPDGHDGFLLEFEAINGWVEGWLKRKMPEFYERRVINPEEYVQGEEGFGIKKESVFGEAEADVTRW.

The AB hydrolase-1 domain maps to 60 to 245 (LVICHALTGS…AALLTYRSRD (186 aa)). Catalysis depends on serine 154, which acts as the Nucleophile. 2 disordered regions span residues 250-335 (RFGR…VKTQ) and 388-413 (DLSA…DATE). The segment covering 273–282 (QETTDPSVPS) has biased composition (polar residues). The segment covering 295-304 (AWREHNDGHR) has biased composition (basic and acidic residues). Positions 389 to 409 (LSAPSRDTSLSSLSSGLPSSP) are enriched in low complexity. Active-site residues include aspartate 438 and histidine 467.

This sequence belongs to the AB hydrolase superfamily. MetX family.

It is found in the cytoplasm. It carries out the reaction L-homoserine + acetyl-CoA = O-acetyl-L-homoserine + CoA. It functions in the pathway amino-acid biosynthesis; L-methionine biosynthesis via de novo pathway; O-acetyl-L-homoserine from L-homoserine: step 1/1. Its activity is regulated as follows. Inhibited by 6-carbamoyl-3a,4,5,9b-tetrahydro-3H-cyclopenta[ c]quinoline-4-carboxylic acid (CTCQC). Commits homoserine to the methionine biosynthesis pathway by catalyzing its O-acetylation. This is Homoserine O-acetyltransferase from Cryptococcus neoformans var. grubii serotype A (strain H99 / ATCC 208821 / CBS 10515 / FGSC 9487) (Filobasidiella neoformans var. grubii).